We begin with the raw amino-acid sequence, 691 residues long: DNA ligase (691 aa).

NAD(+) is bound by residues 56–60 (DRAYD), 104–105 (SI), and E139. The active-site N6-AMP-lysine intermediate is K141. Residues R162, E198, K314, and K338 each contribute to the NAD(+) site. 4 residues coordinate Zn(2+): C429, C432, C445, and C451. The BRCT domain maps to 607 to 691 (TAGDALSGQT…SLLESHGIEI (85 aa)).

Belongs to the NAD-dependent DNA ligase family. LigA subfamily. Mg(2+) serves as cofactor. Mn(2+) is required as a cofactor.

It catalyses the reaction NAD(+) + (deoxyribonucleotide)n-3'-hydroxyl + 5'-phospho-(deoxyribonucleotide)m = (deoxyribonucleotide)n+m + AMP + beta-nicotinamide D-nucleotide.. In terms of biological role, DNA ligase that catalyzes the formation of phosphodiester linkages between 5'-phosphoryl and 3'-hydroxyl groups in double-stranded DNA using NAD as a coenzyme and as the energy source for the reaction. It is essential for DNA replication and repair of damaged DNA. In Natronomonas pharaonis (strain ATCC 35678 / DSM 2160 / CIP 103997 / JCM 8858 / NBRC 14720 / NCIMB 2260 / Gabara) (Halobacterium pharaonis), this protein is DNA ligase.